The following is a 353-amino-acid chain: Putative transcription factor MTF1 (353 aa).

Polar residues-rich tracts occupy residues 11–26 and 36–58; these read VTRSNQQTAANTTSPA and EPSNVSDLTSEPVESTQIKQQGN. 2 disordered regions span residues 11–96 and 129–174; these read VTRS…ALPC and FTTT…TTNP. Low complexity-rich tracts occupy residues 59 to 95 and 133 to 145; these read TEASQDIQQEQQQQQTHIHPQQPALSAQQTQQQPALP and NSSPNPSSPSPSS. Residues 148-164 show a composition bias toward basic residues; sequence SHTRKNSKYTVRHHRTR. The span at 165–174 shows a compositional bias: polar residues; the sequence is QSSFNGTTNP.

It localises to the nucleus. May be involved in transcriptional activation. This chain is Putative transcription factor MTF1 (MTF1), found in Mucor circinelloides f. lusitanicus (Mucor racemosus var. lusitanicus).